A 341-amino-acid polypeptide reads, in one-letter code: UDP-N-acetylglucosamine--N-acetylmuramyl-(pentapeptide) pyrophosphoryl-undecaprenol N-acetylglucosamine transferase (341 aa).

Residues 10–12, N124, S177, and Q275 contribute to the UDP-N-acetyl-alpha-D-glucosamine site; that span reads TGG.

This sequence belongs to the glycosyltransferase 28 family. MurG subfamily.

The protein localises to the cell inner membrane. The enzyme catalyses di-trans,octa-cis-undecaprenyl diphospho-N-acetyl-alpha-D-muramoyl-L-alanyl-D-glutamyl-meso-2,6-diaminopimeloyl-D-alanyl-D-alanine + UDP-N-acetyl-alpha-D-glucosamine = di-trans,octa-cis-undecaprenyl diphospho-[N-acetyl-alpha-D-glucosaminyl-(1-&gt;4)]-N-acetyl-alpha-D-muramoyl-L-alanyl-D-glutamyl-meso-2,6-diaminopimeloyl-D-alanyl-D-alanine + UDP + H(+). It functions in the pathway cell wall biogenesis; peptidoglycan biosynthesis. Its function is as follows. Cell wall formation. Catalyzes the transfer of a GlcNAc subunit on undecaprenyl-pyrophosphoryl-MurNAc-pentapeptide (lipid intermediate I) to form undecaprenyl-pyrophosphoryl-MurNAc-(pentapeptide)GlcNAc (lipid intermediate II). This Campylobacter hominis (strain ATCC BAA-381 / DSM 21671 / CCUG 45161 / LMG 19568 / NCTC 13146 / CH001A) protein is UDP-N-acetylglucosamine--N-acetylmuramyl-(pentapeptide) pyrophosphoryl-undecaprenol N-acetylglucosamine transferase.